A 275-amino-acid polypeptide reads, in one-letter code: 4-hydroxy-3-methylbut-2-enyl diphosphate reductase (275 aa).

C12 serves as a coordination point for [4Fe-4S] cluster. 2 residues coordinate (2E)-4-hydroxy-3-methylbut-2-enyl diphosphate: H40 and H70. 2 residues coordinate dimethylallyl diphosphate: H40 and H70. Isopentenyl diphosphate is bound by residues H40 and H70. C92 lines the [4Fe-4S] cluster pocket. A (2E)-4-hydroxy-3-methylbut-2-enyl diphosphate-binding site is contributed by H119. H119 is a dimethylallyl diphosphate binding site. Residue H119 coordinates isopentenyl diphosphate. The Proton donor role is filled by E121. T151 contributes to the (2E)-4-hydroxy-3-methylbut-2-enyl diphosphate binding site. A [4Fe-4S] cluster-binding site is contributed by C181. 4 residues coordinate (2E)-4-hydroxy-3-methylbut-2-enyl diphosphate: S209, S210, N211, and S251. Dimethylallyl diphosphate-binding residues include S209, S210, N211, and S251. Isopentenyl diphosphate-binding residues include S209, S210, N211, and S251.

It belongs to the IspH family. Requires [4Fe-4S] cluster as cofactor.

The enzyme catalyses isopentenyl diphosphate + 2 oxidized [2Fe-2S]-[ferredoxin] + H2O = (2E)-4-hydroxy-3-methylbut-2-enyl diphosphate + 2 reduced [2Fe-2S]-[ferredoxin] + 2 H(+). It catalyses the reaction dimethylallyl diphosphate + 2 oxidized [2Fe-2S]-[ferredoxin] + H2O = (2E)-4-hydroxy-3-methylbut-2-enyl diphosphate + 2 reduced [2Fe-2S]-[ferredoxin] + 2 H(+). Its pathway is isoprenoid biosynthesis; dimethylallyl diphosphate biosynthesis; dimethylallyl diphosphate from (2E)-4-hydroxy-3-methylbutenyl diphosphate: step 1/1. It functions in the pathway isoprenoid biosynthesis; isopentenyl diphosphate biosynthesis via DXP pathway; isopentenyl diphosphate from 1-deoxy-D-xylulose 5-phosphate: step 6/6. Catalyzes the conversion of 1-hydroxy-2-methyl-2-(E)-butenyl 4-diphosphate (HMBPP) into a mixture of isopentenyl diphosphate (IPP) and dimethylallyl diphosphate (DMAPP). Acts in the terminal step of the DOXP/MEP pathway for isoprenoid precursor biosynthesis. This Thermotoga maritima (strain ATCC 43589 / DSM 3109 / JCM 10099 / NBRC 100826 / MSB8) protein is 4-hydroxy-3-methylbut-2-enyl diphosphate reductase.